We begin with the raw amino-acid sequence, 487 residues long: DNA ligase (487 aa).

K159 acts as the N6-AMP-lysine intermediate in catalysis. 3 residues coordinate ATP: R164, R182, and E217. E217 contacts a divalent metal cation. An interaction with the sliding clamp region spans residues 229 to 237 (EGLDFLFDA). A divalent metal cation is bound at residue E344. ATP contacts are provided by R359 and K365.

This sequence belongs to the ATP-dependent DNA ligase family. Interacts with the sliding clamp. It depends on a divalent metal cation as a cofactor.

The catalysed reaction is ATP + (deoxyribonucleotide)n-3'-hydroxyl + 5'-phospho-(deoxyribonucleotide)m = (deoxyribonucleotide)n+m + AMP + diphosphate.. Its function is as follows. DNA ligase, which is expressed in the early stage of lytic development, has been implicated in T4 DNA synthesis and genetic recombination. It may also play a role in T4 DNA repair. The chain is DNA ligase (30) from Escherichia coli (Bacteriophage T6).